A 357-amino-acid chain; its full sequence is MDIFKELILKHPDENVLISPVSILSTLSILNHGAAGSTAEQLSKYIENVNENTPDDKKDDNNDMDVDIPYCATLATANKIYCSDSIEFHASFLQKIKDGFQTVNFNNANQTKELINEWVKTMTNGKINSLLTSPLSINTRMTVVSAVHFKAMWKYPFSKHLTYTDKFYISKNIVTSVDMMVSTENDLQYVHINELFGGFSIIDIPYEGNSSMVIILPDDIEGIYNIEKNITDEKFKKWCGMLSTKSIDLYMPKFKVEMTEPYNLVPILENLGLTNIFGYYADFSKMCNETITVEKFLHTTFIDVNEEYTEASAVTGVFMTNFSMVYRTKVYINHPFMYMIKDNTGRILFIGKYCYPQ.

It belongs to the serpin family. Poxviruses subfamily.

Its subcellular location is the host cytoplasm. In terms of biological role, this viral protein may be involved in the regulation of the complement cascade. Involved in red pock formation. The chain is Serine proteinase inhibitor 1 (SPI-1) from Oryctolagus cuniculus (Rabbit).